The primary structure comprises 190 residues: MLGMIRNSLFGSVETWPWQVLSTGGKEDVSYEERACEGGKFATVEVTDKPVDEALREAMPKIMKYVGGTNDKGVGMGMTVPVSFALFPNEDGSLQKKLKVWFRIPNQFQGSPPAPSDESVKIEEREGITVYSTQFGGYAKEADYVAHATQLRTTLEGTPATYQGDVYYCAGYDPPMKPYGRRNEVWLVKA.

It belongs to the HEBP family. In terms of assembly, monomer. Ubiquitously expressed. Extremely abundant in liver.

The protein resides in the cytoplasm. Its function is as follows. May bind free porphyrinogens that may be present in the cell and thus facilitate removal of these potentially toxic compound. Binds with a high affinity to one molecule of heme or porphyrins. It binds metalloporphyrins, free porphyrins and N-methylprotoporphyrin with similar affinities. This is Heme-binding protein 1 (Hebp1) from Mus musculus (Mouse).